Consider the following 102-residue polypeptide: MNKIRKGDEVIVITGKDKGKRGVVLSVGEGKVIVEGINLVKKHVKPNPMKGTTGGVEAKTMPLQISNVALVDANGKASRVGIKVEGDKKVRFLKTTGAELSA.

This sequence belongs to the universal ribosomal protein uL24 family. As to quaternary structure, part of the 50S ribosomal subunit.

In terms of biological role, one of two assembly initiator proteins, it binds directly to the 5'-end of the 23S rRNA, where it nucleates assembly of the 50S subunit. Its function is as follows. One of the proteins that surrounds the polypeptide exit tunnel on the outside of the subunit. The sequence is that of Large ribosomal subunit protein uL24 from Paraburkholderia phytofirmans (strain DSM 17436 / LMG 22146 / PsJN) (Burkholderia phytofirmans).